Reading from the N-terminus, the 353-residue chain is Guanine nucleotide-binding protein subunit alpha (353 aa).

A disordered region spans residues Met-1 to Asn-21. The N-myristoyl glycine moiety is linked to residue Gly-2. The S-palmitoyl cysteine moiety is linked to residue Cys-3. The segment covering Thr-7–Asn-21 has biased composition (basic and acidic residues). Positions Asn-32–Ile-353 constitute a G-alpha domain. The interval Lys-35–Thr-48 is G1 motif. Residues Glu-43, Ser-44, Gly-45, Lys-46, Ser-47, Thr-48, Asp-150, Leu-175, Thr-181, Gly-203, Asn-269, Lys-270, Asp-272, and Ala-325 each contribute to the GTP site. Ser-47 contributes to the Mg(2+) binding site. The G2 motif stretch occupies residues Asp-173–Thr-181. Thr-181 contributes to the Mg(2+) binding site. Residues Tyr-196–Arg-205 form a G3 motif region. The segment at Ile-265–Asp-272 is G4 motif. Residues Thr-323–Thr-328 form a G5 motif region.

It belongs to the G-alpha family. G(q) subfamily. As to quaternary structure, g proteins are composed of 3 units; alpha, beta and gamma. The alpha chain contains the guanine nucleotide binding site. Requires Mg(2+) as cofactor.

Functionally, guanine nucleotide-binding proteins (G proteins) are involved as modulators or transducers in various transmembrane signaling systems. Plays a role in pathogenicity, specifically in appressorium formation in rice blast disease. Also involved in mating. The chain is Guanine nucleotide-binding protein subunit alpha (MAGB) from Pyricularia oryzae (strain 70-15 / ATCC MYA-4617 / FGSC 8958) (Rice blast fungus).